Reading from the N-terminus, the 326-residue chain is ATP phosphoribosyltransferase regulatory subunit (326 aa).

This sequence belongs to the class-II aminoacyl-tRNA synthetase family. HisZ subfamily. Heteromultimer composed of HisG and HisZ subunits.

Its subcellular location is the cytoplasm. The protein operates within amino-acid biosynthesis; L-histidine biosynthesis; L-histidine from 5-phospho-alpha-D-ribose 1-diphosphate: step 1/9. Functionally, required for the first step of histidine biosynthesis. May allow the feedback regulation of ATP phosphoribosyltransferase activity by histidine. The sequence is that of ATP phosphoribosyltransferase regulatory subunit from Streptococcus thermophilus (strain ATCC BAA-491 / LMD-9).